The primary structure comprises 45 residues: Large ribosomal subunit protein bL36 (45 aa).

Belongs to the bacterial ribosomal protein bL36 family.

The sequence is that of Large ribosomal subunit protein bL36 from Aliivibrio salmonicida (strain LFI1238) (Vibrio salmonicida (strain LFI1238)).